Reading from the N-terminus, the 190-residue chain is Fe/S biogenesis protein NfuA (190 aa).

Residues Cys-148 and Cys-151 each contribute to the [4Fe-4S] cluster site.

The protein belongs to the NfuA family. Homodimer. [4Fe-4S] cluster serves as cofactor.

Functionally, involved in iron-sulfur cluster biogenesis. Binds a 4Fe-4S cluster, can transfer this cluster to apoproteins, and thereby intervenes in the maturation of Fe/S proteins. Could also act as a scaffold/chaperone for damaged Fe/S proteins. The sequence is that of Fe/S biogenesis protein NfuA from Baumannia cicadellinicola subsp. Homalodisca coagulata.